We begin with the raw amino-acid sequence, 548 residues long: Protein swallow (548 aa).

Disordered stretches follow at residues 67–109, 184–206, and 358–428; these read AKTC…GRSS, NCQTHSNSDSNYNSNSNNSSSSF, and FSSV…ELIS. Residues 79–91 show a composition bias toward acidic residues; it reads QEDEDDYDEDVDG. A compositionally biased stretch (low complexity) spans 189–205; it reads SNSDSNYNSNSNNSSSS. Phosphoserine is present on residues S362 and S368. Residues 388-402 are compositionally biased toward polar residues; it reads APNNSETSQPSSNDS. The span at 406 to 420 shows a compositional bias: basic and acidic residues; the sequence is VEAHEEERPSSRRQW. Phosphoserine is present on residues S463, S471, S475, S483, S485, and S487.

As to quaternary structure, may be a homo- or heterodimer.

It is found in the nucleus. Has a role in localizing bicoid mRNA at the anterior margin of the oocyte during oogenesis, and a poorly characterized role in nuclear divisions in early embryogenesis. The sequence is that of Protein swallow (swa) from Drosophila melanogaster (Fruit fly).